The chain runs to 1827 residues: Chromodomain-helicase-DNA-binding protein 2 (1827 aa).

Residues 1-14 (MMRNKDKSQEEDSS) are compositionally biased toward basic and acidic residues. Residues 1 to 264 (MMRNKDKSQE…EQQDNSETIE (264 aa)) are disordered. Residues 15–75 (LHSNASSRSA…SESESAGSKS (61 aa)) are compositionally biased toward low complexity. Basic and acidic residues-rich tracts occupy residues 81 to 101 (EAKE…KMWE), 115 to 128 (SRQE…KEEA), and 146 to 155 (KKQEKWKQDP). The span at 175–204 (GKARRPVPRRTVPKPQVKKQPKIQRGKRKK) shows a compositional bias: basic residues. A phosphoserine mark is found at Ser207 and Ser208. Positions 234-258 (EDDDFETDSDDLIEMTGEGGDEQQD) are enriched in acidic residues. Thr240 is modified (phosphothreonine). The residue at position 242 (Ser242) is a Phosphoserine. Chromo domains are found at residues 261-353 (ETIE…QWLG) and 378-456 (QIVE…IPTR). The Helicase ATP-binding domain maps to 496-666 (AHSWCKSNSV…WSLLHFIMPE (171 aa)). 509 to 516 (DEMGLGKT) lines the ATP pocket. Positions 617-620 (DEAH) match the DEAH box motif. The 152-residue stretch at 795-946 (LLDKLLTRLR…HLVIQRMDTT (152 aa)) folds into the Helicase C-terminal domain. Disordered regions lie at residues 1030 to 1124 (EDEE…RSVR), 1329 to 1465 (GTVA…DDLD), 1556 to 1638 (HKKR…ADRG), and 1679 to 1827 (HMDA…VRKT). The span at 1037 to 1065 (ERPHKDWDEIIPEEQRKKVEEEERQKELE) shows a compositional bias: basic and acidic residues. Ser1085, Ser1087, Ser1365, and Ser1386 each carry phosphoserine. Over residues 1347 to 1371 (KKENKAPRLKDEHGLEPASPRHSDN) the composition is skewed to basic and acidic residues. Composition is skewed to basic and acidic residues over residues 1396–1431 (ENKE…KGGD) and 1565–1574 (EQKKKDDSLG). The segment at 1464–1566 (LDQETFSICK…KKRSQEEEEQ (103 aa)) is CHD1 helical C-terminal domain (CHCT). The span at 1584–1601 (SGSSRDSLISQSHTSHNL) shows a compositional bias: polar residues. Basic and acidic residues-rich tracts occupy residues 1697 to 1719 (RPYE…DRHH), 1738 to 1748 (QDFRRMSDHRP), 1759 to 1771 (DHYR…KLGE), and 1794 to 1813 (SPHD…RSLE). The residue at position 1806 (Ser1806) is a Phosphoserine.

Interacts with MYOD1. Interacts with histone H3.3. Widely expressed.

It localises to the nucleus. It carries out the reaction ATP + H2O = ADP + phosphate + H(+). Its function is as follows. ATP-dependent chromatin-remodeling factor that specifically binds to the promoter of target genes, leading to chromatin remodeling, possibly by promoting deposition of histone H3.3. Involved in myogenesis via interaction with MYOD1: binds to myogenic gene regulatory sequences and mediates incorporation of histone H3.3 prior to the onset of myogenic gene expression, promoting their expression. The sequence is that of Chromodomain-helicase-DNA-binding protein 2 (Chd2) from Mus musculus (Mouse).